The primary structure comprises 271 residues: uncharacterized protein (271 aa).

The N-terminal stretch at 1 to 22 (MIHSKRLKLCLCLIILSVFIGA) is a signal peptide. The N-palmitoyl cysteine moiety is linked to residue Cys23. Cys23 is lipidated: S-diacylglycerol cysteine.

Belongs to the staphylococcal tandem lipoprotein family.

It is found in the cell membrane. This is an uncharacterized protein from Staphylococcus aureus (strain MW2).